Consider the following 420-residue polypeptide: Methionine aminopeptidase 2 (420 aa).

The interval 1–48 (MSDAIAKDAVNTSSEKEPVSATPELKTSGSPDAAVSSGDKKKKKKKKK) is disordered. H172 contacts substrate. A divalent metal cation contacts are provided by D192, D203, and H272. Position 280 (H280) interacts with substrate. The a divalent metal cation site is built by E305 and E401.

Belongs to the peptidase M24A family. Methionine aminopeptidase eukaryotic type 2 subfamily. Co(2+) serves as cofactor. It depends on Zn(2+) as a cofactor. Requires Mn(2+) as cofactor. The cofactor is Fe(2+).

Its subcellular location is the cytoplasm. The catalysed reaction is Release of N-terminal amino acids, preferentially methionine, from peptides and arylamides.. Its function is as follows. Cotranslationally removes the N-terminal methionine from nascent proteins. The N-terminal methionine is often cleaved when the second residue in the primary sequence is small and uncharged (Met-Ala-, Cys, Gly, Pro, Ser, Thr, or Val). The protein is Methionine aminopeptidase 2 of Lachancea thermotolerans (strain ATCC 56472 / CBS 6340 / NRRL Y-8284) (Yeast).